The following is a 953-amino-acid chain: 2-oxoglutarate dehydrogenase E1 component (953 aa).

Belongs to the alpha-ketoglutarate dehydrogenase family. In terms of assembly, homodimer. Part of the 2-oxoglutarate dehydrogenase (OGDH) complex composed of E1 (2-oxoglutarate dehydrogenase), E2 (dihydrolipoamide succinyltransferase) and E3 (dihydrolipoamide dehydrogenase); the complex contains multiple copies of the three enzymatic components (E1, E2 and E3). Thiamine diphosphate serves as cofactor.

The enzyme catalyses N(6)-[(R)-lipoyl]-L-lysyl-[protein] + 2-oxoglutarate + H(+) = N(6)-[(R)-S(8)-succinyldihydrolipoyl]-L-lysyl-[protein] + CO2. E1 component of the 2-oxoglutarate dehydrogenase (OGDH) complex which catalyzes the decarboxylation of 2-oxoglutarate, the first step in the conversion of 2-oxoglutarate to succinyl-CoA and CO(2). The protein is 2-oxoglutarate dehydrogenase E1 component of Oceanobacillus iheyensis (strain DSM 14371 / CIP 107618 / JCM 11309 / KCTC 3954 / HTE831).